A 292-amino-acid chain; its full sequence is Putative peptidyl-prolyl cis-trans isomerase NifM (292 aa).

Positions 148–243 constitute a PpiC domain; the sequence is HILVTINEDF…IGFHVLYCES (96 aa).

This sequence belongs to the PpiC/parvulin rotamase family.

The enzyme catalyses [protein]-peptidylproline (omega=180) = [protein]-peptidylproline (omega=0). Functionally, required for the activation and stabilization of the iron-component (NifH) of nitrogenase. Probable PPIase. The sequence is that of Putative peptidyl-prolyl cis-trans isomerase NifM (nifM) from Azotobacter vinelandii.